The sequence spans 61 residues: Metallothionein-2B (61 aa).

The residue at position 1 (M1) is an N-acetylmethionine. The interval 1–29 is beta; that stretch reads MDPNCSCATGDSCTCASSCKCKECKCTSC. Positions 5, 7, 13, 15, 19, 21, 24, 26, 29, 33, 34, 36, 37, 41, 44, 48, 50, 57, 59, and 60 each coordinate a divalent metal cation. The alpha stretch occupies residues 30 to 61; it reads KKSCCSCCPAGCTKCAQGCICKGASDKCSCCA.

Belongs to the metallothionein superfamily. Type 1 family. As to quaternary structure, monomer.

Functionally, metallothioneins have a high content of cysteine residues that bind various heavy metals; these proteins are transcriptionally regulated by both heavy metals and glucocorticoids. In Oryctolagus cuniculus (Rabbit), this protein is Metallothionein-2B.